The chain runs to 510 residues: Zinc metalloproteinase (510 aa).

An N-terminal signal peptide occupies residues 1-24 (MKSKLICIIMVIAFQAHFTMTVKA). A propeptide spanning residues 25 to 200 (DSVGEEKLQN…ILKKQNMLSE (176 aa)) is cleaved from the precursor. H349 provides a ligand contact to Zn(2+). E350 is an active-site residue. Residues H353 and E373 each coordinate Zn(2+). The active-site Proton donor is the H437.

Belongs to the peptidase M4 family. The cofactor is Zn(2+).

Its subcellular location is the secreted. Its function is as follows. Probably linked to the pathogenesis of listerial infection. This is Zinc metalloproteinase (mpl) from Listeria monocytogenes serovar 1/2a (strain ATCC BAA-679 / EGD-e).